Here is a 309-residue protein sequence, read N- to C-terminus: Homoserine O-acetyltransferase (309 aa).

Residue C148 is the Acyl-thioester intermediate of the active site. 2 residues coordinate substrate: K169 and S198. Residue H241 is the Proton acceptor of the active site. Residue E243 is part of the active site. R255 lines the substrate pocket.

This sequence belongs to the MetA family.

The protein resides in the cytoplasm. It catalyses the reaction L-homoserine + acetyl-CoA = O-acetyl-L-homoserine + CoA. It participates in amino-acid biosynthesis; L-methionine biosynthesis via de novo pathway; O-acetyl-L-homoserine from L-homoserine: step 1/1. Transfers an acetyl group from acetyl-CoA to L-homoserine, forming acetyl-L-homoserine. In vitro, can also use propionyl-CoA as acyl donor. The protein is Homoserine O-acetyltransferase of Shouchella clausii (Alkalihalobacillus clausii).